The following is a 517-amino-acid chain: Maturase K (517 aa).

It belongs to the intron maturase 2 family. MatK subfamily.

The protein resides in the plastid. Its subcellular location is the chloroplast. Its function is as follows. Usually encoded in the trnK tRNA gene intron. Probably assists in splicing its own and other chloroplast group II introns. The chain is Maturase K from Veronica arvensis (Wall speedwell).